The primary structure comprises 450 residues: Phosphoglucosamine mutase (450 aa).

The active-site Phosphoserine intermediate is serine 101. Mg(2+)-binding residues include serine 101, aspartate 242, aspartate 244, and aspartate 246. The residue at position 101 (serine 101) is a Phosphoserine.

This sequence belongs to the phosphohexose mutase family. Mg(2+) serves as cofactor. Post-translationally, activated by phosphorylation.

The catalysed reaction is alpha-D-glucosamine 1-phosphate = D-glucosamine 6-phosphate. Functionally, catalyzes the conversion of glucosamine-6-phosphate to glucosamine-1-phosphate. This Rhodopseudomonas palustris (strain BisB5) protein is Phosphoglucosamine mutase.